Consider the following 850-residue polypeptide: MRVREMQRNWQHLGRWGLLFLGILIICSAADKLWVTVYYGVPVWKEATTTLFCASDAKAYEREVHNVWATYACVPTDPSPQELVLGNVSEKFNMWKNNMVDQMHEDIISLWDESLKPCVKLTPLCVTLNCTKAIINVTSSNNTTLAPNVTISEEMKNCSFNITTEIRDKQKKEYALFYKLDVVQINNSNTSYRLINCNTSTLTQACPKVSFDPIPIHYCAPAGFAILKCNNKTFNGTGLCRNVSTVQCTHGIKPVVSTQLLLNGSLAEEKMIIRSENISDNTKTIIVQFKNPVKINCTRPNNNTRRSIHIGPGRAFYATGEIIGDTRKAHCNISEKQWYDTLIKIATEFKDQYNKTVGFQPSAGGDLEITTHSFNCRGEFFYCNTTILFNHTRVNDILSNNHTRENDTITLPCRIKQIVNMWQRVGQAMYAPPIAGKIQCNSNITGLLLTIDGGEGNESETLRPGGGDMRDNWRSELYKYKVVKIEPLGVAPTKAKRQVVQREKRAVGMGAMFLGFLGAAGSTMGAASITLTVQARNLLSGIVQQQSNLLKAIEAQQHLLQLTVWGIKQLQARILAVERYLKDQQLLGIWGCSGKLICPTTVPWNLSWSNKSQDEIWGNMTWMEWEKEIGNYTDTIYRLIESAQNQQEKNEQDLLALDKWDNLWNWFSITRWLWYIEIFIMIIGSLIGLRIVFTVLSIINRVRQGYSPLSLQTLIPNSRGPERPGGIEEEGGEQDKDRSIRLVSGFLALAWDDFRSLCVFSYHCLRNFILIAARTVDKGLKRGWEVLKYLWNLAQYWGQELKNSAISLLDRTAIAVAEGTDRIIEILQRAGRAVLNIPRRIRQGLERALL.

The signal sequence occupies residues M1–D31. At K32 to I678 the chain is on the extracellular side. The cysteines at positions 53 and 73 are disulfide-linked. N-linked (GlcNAc...) asparagine; by host glycans are attached at residues N87, N129, N136, N141, N142, N148, N157, N161, N186, N189, N198, N231, N235, N242, N263, N277, N296, N302, N332, and N354. 5 disulfide bridges follow: C118-C206, C125-C197, C130-C158, C219-C248, and C229-C240. Residues C130–N157 are V1. The tract at residues C158 to C197 is V2. Positions C297 to H330 are V3. C297 and C331 are oxidised to a cystine. Residues S362–H372 are CD4-binding loop. 2 cysteine pairs are disulfide-bonded: C376/C440 and C383/C413. Residues C383–C413 form a V4 region. 6 N-linked (GlcNAc...) asparagine; by host glycosylation sites follow: N384, N390, N401, N406, N443, and N457. V5 stretches follow at residues G456–G465 and E458–G465. Positions A506–A526 are fusion peptide. The segment at K568–L586 is immunosuppression. The cysteines at positions 592 and 598 are disulfide-linked. Residues N605, N610, N619, and N631 are each glycosylated (N-linked (GlcNAc...) asparagine; by host). Residues K627–D661 are a coiled coil. The tract at residues A656 to E677 is MPER; binding to GalCer. Residues F679–I699 form a helical membrane-spanning segment. Over N700 to L850 the chain is Cytoplasmic. The short motif at Y706–L709 is the YXXL motif; contains endocytosis signal element. Residues P716–K736 form a disordered region. Residue C758 is the site of S-palmitoyl cysteine; by host attachment. Residues L849 to L850 carry the Di-leucine internalization motif motif.

This sequence belongs to the HIV-1 env protein family. The mature envelope protein (Env) consists of a homotrimer of non-covalently associated gp120-gp41 heterodimers. The resulting complex protrudes from the virus surface as a spike. There seems to be as few as 10 spikes on the average virion. Interacts with host CD4, CCR5 and CXCR4. Gp120 also interacts with the C-type lectins CD209/DC-SIGN and CLEC4M/DC-SIGNR (collectively referred to as DC-SIGN(R)). Gp120 and gp41 interact with GalCer. Gp120 interacts with host ITGA4/ITGB7 complex; on CD4+ T-cells, this interaction results in rapid activation of integrin ITGAL/LFA-1, which facilitates efficient cell-to-cell spreading of HIV-1. Gp120 interacts with cell-associated heparan sulfate; this interaction increases virus infectivity on permissive cells and may be involved in infection of CD4- cells. As to quaternary structure, the mature envelope protein (Env) consists of a homotrimer of non-covalently associated gp120-gp41 heterodimers. The resulting complex protrudes from the virus surface as a spike. There seems to be as few as 10 spikes on the average virion. In terms of processing, highly glycosylated by host. The high number of glycan on the protein is reffered to as 'glycan shield' because it contributes to hide protein sequence from adaptive immune system. Palmitoylation of the transmembrane protein and of Env polyprotein (prior to its proteolytic cleavage) is essential for their association with host cell membrane lipid rafts. Palmitoylation is therefore required for envelope trafficking to classical lipid rafts, but not for viral replication. Post-translationally, specific enzymatic cleavages in vivo yield mature proteins. Envelope glycoproteins are synthesized as an inactive precursor that is heavily N-glycosylated and processed likely by host cell furin in the Golgi to yield the mature SU and TM proteins. The cleavage site between SU and TM requires the minimal sequence [KR]-X-[KR]-R. About 2 of the 9 disulfide bonds of gp41 are reduced by P4HB/PDI, following binding to CD4 receptor.

It is found in the virion membrane. It localises to the host cell membrane. Its subcellular location is the host endosome membrane. Oligomerizes in the host endoplasmic reticulum into predominantly trimers. In a second time, gp160 transits in the host Golgi, where glycosylation is completed. The precursor is then proteolytically cleaved in the trans-Golgi and thereby activated by cellular furin or furin-like proteases to produce gp120 and gp41. Its function is as follows. Attaches the virus to the host lymphoid cell by binding to the primary receptor CD4. This interaction induces a structural rearrangement creating a high affinity binding site for a chemokine coreceptor like CXCR4 and/or CCR5. Acts as a ligand for CD209/DC-SIGN and CLEC4M/DC-SIGNR, which are respectively found on dendritic cells (DCs), and on endothelial cells of liver sinusoids and lymph node sinuses. These interactions allow capture of viral particles at mucosal surfaces by these cells and subsequent transmission to permissive cells. HIV subverts the migration properties of dendritic cells to gain access to CD4+ T-cells in lymph nodes. Virus transmission to permissive T-cells occurs either in trans (without DCs infection, through viral capture and transmission), or in cis (following DCs productive infection, through the usual CD4-gp120 interaction), thereby inducing a robust infection. In trans infection, bound virions remain infectious over days and it is proposed that they are not degraded, but protected in non-lysosomal acidic organelles within the DCs close to the cell membrane thus contributing to the viral infectious potential during DCs' migration from the periphery to the lymphoid tissues. On arrival at lymphoid tissues, intact virions recycle back to DCs' cell surface allowing virus transmission to CD4+ T-cells. In terms of biological role, acts as a class I viral fusion protein. Under the current model, the protein has at least 3 conformational states: pre-fusion native state, pre-hairpin intermediate state, and post-fusion hairpin state. During fusion of viral and target intracellular membranes, the coiled coil regions (heptad repeats) assume a trimer-of-hairpins structure, positioning the fusion peptide in close proximity to the C-terminal region of the ectodomain. The formation of this structure appears to drive apposition and subsequent fusion of viral and target cell membranes. Complete fusion occurs in host cell endosomes and is dynamin-dependent, however some lipid transfer might occur at the plasma membrane. The virus undergoes clathrin-dependent internalization long before endosomal fusion, thus minimizing the surface exposure of conserved viral epitopes during fusion and reducing the efficacy of inhibitors targeting these epitopes. Membranes fusion leads to delivery of the nucleocapsid into the cytoplasm. In Human immunodeficiency virus type 1 group M subtype F2 (isolate MP257) (HIV-1), this protein is Envelope glycoprotein gp160.